The sequence spans 331 residues: Bifunctional nuclease 1 (331 aa).

A BFN domain is found at 126-261; the sequence is CVQNNPRVLR…RIAYNNGLKV (136 aa). The UVR domain occupies 291 to 326; that stretch reads EAQEFDLVRNMLVAAVEERYKDAAQYRDQLFMFRAK.

It belongs to the bifunctional nuclease family.

Its subcellular location is the nucleus. Functionally, bifunctional nuclease with both RNase and DNase activities. Involved in basal defense response. Participates in abscisic acid-derived callose deposition following infection by a necrotrophic pathogen. This is Bifunctional nuclease 1 (BBD1) from Oryza sativa subsp. indica (Rice).